A 129-amino-acid polypeptide reads, in one-letter code: Large ribosomal subunit protein bL12 (129 aa).

This sequence belongs to the bacterial ribosomal protein bL12 family. Homodimer. Part of the ribosomal stalk of the 50S ribosomal subunit. Forms a multimeric L10(L12)X complex, where L10 forms an elongated spine to which 2 to 4 L12 dimers bind in a sequential fashion. Binds GTP-bound translation factors.

Functionally, forms part of the ribosomal stalk which helps the ribosome interact with GTP-bound translation factors. Is thus essential for accurate translation. The chain is Large ribosomal subunit protein bL12 from Pelotomaculum thermopropionicum (strain DSM 13744 / JCM 10971 / SI).